Consider the following 616-residue polypeptide: Adenylosuccinate synthetase 1 (616 aa).

Residues 1–27 (MDKQAERGQSAGPVKTPQGTQPPAHNY) are disordered. Positions 17-27 (PQGTQPPAHNY) are enriched in polar residues. GTP-binding positions include 87–93 (GDEGKGK) and 117–119 (GHT). Asp88 (proton acceptor) is an active-site residue. The Mg(2+) site is built by Asp88 and Gly117. IMP contacts are provided by residues 88-91 (DEGK), 115-118 (NAGH), Thr202, Lys216, Gln328, Thr343, and Lys472. Catalysis depends on His118, which acts as the Proton donor. 468–474 (AVTKKPR) contributes to the substrate binding site. GTP is bound by residues Arg474 and 603-605 (GNG).

It belongs to the adenylosuccinate synthetase family. As to quaternary structure, homodimer. Requires Mg(2+) as cofactor.

The protein localises to the cytoplasm. It carries out the reaction IMP + L-aspartate + GTP = N(6)-(1,2-dicarboxyethyl)-AMP + GDP + phosphate + 2 H(+). It participates in purine metabolism; AMP biosynthesis via de novo pathway; AMP from IMP: step 1/2. Its function is as follows. Plays an important role in the salvage pathway for purine nucleotide biosynthesis. Catalyzes the first committed step in the biosynthesis of AMP from IMP. The protein is Adenylosuccinate synthetase 1 of Trypanosoma cruzi (strain CL Brener).